We begin with the raw amino-acid sequence, 192 residues long: UPF0149 protein YgfB (192 aa).

It belongs to the UPF0149 family.

The protein is UPF0149 protein YgfB of Escherichia coli O127:H6 (strain E2348/69 / EPEC).